Here is a 423-residue protein sequence, read N- to C-terminus: D-tagatose-1,6-bisphosphate aldolase subunit GatZ (423 aa).

This sequence belongs to the GatZ/KbaZ family. GatZ subfamily. In terms of assembly, forms a complex with GatY.

Its pathway is carbohydrate metabolism; D-tagatose 6-phosphate degradation; D-glyceraldehyde 3-phosphate and glycerone phosphate from D-tagatose 6-phosphate: step 2/2. Its function is as follows. Component of the tagatose-1,6-bisphosphate aldolase GatYZ that is required for full activity and stability of the Y subunit. Could have a chaperone-like function for the proper and stable folding of GatY. When expressed alone, GatZ does not show any aldolase activity. Is involved in the catabolism of galactitol. The protein is D-tagatose-1,6-bisphosphate aldolase subunit GatZ of Klebsiella pneumoniae subsp. pneumoniae (strain ATCC 700721 / MGH 78578).